Reading from the N-terminus, the 161-residue chain is UPF0225 protein NTHI0386 (161 aa).

It belongs to the UPF0225 family.

In Haemophilus influenzae (strain 86-028NP), this protein is UPF0225 protein NTHI0386.